A 104-amino-acid chain; its full sequence is Probable head completion protein 1 (104 aa).

This sequence belongs to the skunalikevirus head completion protein 1 family.

The protein localises to the virion. Probable head completion protein that exhibits an open central channel for viral DNA ejection. Part of the head-tail connector by binding to the portal protein and to the head completion protein 2. Plays a role in morphogenesis of the virion capsid after genome packaging. This Lactococcus lactis (Lactococcus lactis bacteriophage p2) protein is Probable head completion protein 1.